The following is a 132-amino-acid chain: Interleukin-13 (132 aa).

An N-terminal signal peptide occupies residues 1–18; it reads MALLLTTVIALTCLGGFA. N-linked (GlcNAc...) asparagine glycans are attached at residues N38, N49, N57, and N72. Intrachain disulfides connect C48-C76 and C64-C90.

Belongs to the IL-4/IL-13 family. Interacts with IL13RA2.

It is found in the secreted. In terms of biological role, cytokine that plays important roles in allergic inflammation and immune response to parasite infection. Synergizes with IL2 in regulating interferon-gamma synthesis. Stimulates B-cell proliferation, and activation of eosinophils, basophils, and mast cells. Plays an important role in controlling IL33 activity by modulating the production of transmembrane and soluble forms of interleukin-1 receptor-like 1/IL1RL1. Displays the capacity to antagonize Th1-driven proinflammatory immune response and downregulates synthesis of many proinflammatory cytokines including IL1, IL6, IL10, IL12 and TNF-alpha through a mechanism that partially involves suppression of NF-kappa-B. Also functions on nonhematopoietic cells, including endothelial cells where it induces vascular cell adhesion protein 1/VCAM1, which is important in the recruitment of eosinophils. Exerts its biological effects through its receptors which comprises the IL4R chain and the IL13RA1 chain, to activate JAK1 and TYK2, leading to the activation of STAT6. Aside from IL13RA1, another receptor IL13RA2 acts as a high affinity decoy for IL13 and mediates internalization and depletion of extracellular IL13. This is Interleukin-13 (IL13) from Macaca mulatta (Rhesus macaque).